The sequence spans 422 residues: Zinc finger protein zfp-2 (422 aa).

The tract at residues 95-119 (AIPCTSSSMQPSTSSNPSSGEHQPV) is disordered. The span at 99 to 113 (TSSSMQPSTSSNPSS) shows a compositional bias: low complexity. C2H2-type zinc fingers lie at residues 171 to 194 (YRCTNCKTYFGNKEVYQRHIQEVH), 200 to 222 (FRCFNCGMRFANKTSMTHHLKDH), 229 to 251 (FSCDYCPRIFSKLESKTRHHKMH), 255 to 278 (STCQTCMRFFTTEDALRHHQSTAH), 300 to 322 (YSCSYCNLRFHFKKDMLVHERIH), 328 to 350 (YSCGYCMKSFAQSQALTAHIRTH), and 356 to 379 (YGCGKCDKRFRDNSCLRKHELAAH).

In terms of tissue distribution, expressed in vulval cells and all somatic gonad structures such as spermatheca, sheath cells, uterine cells and distal tip cells.

Its subcellular location is the nucleus. In terms of biological role, probable zinc finger transcription factor that acts as a transcriptional repressor. Acts redundantly with the transcriptional repressor lin-35 to control the development of somatic gonad lineages. May, in addition, suppress sensitivity to RNAi. In Caenorhabditis elegans, this protein is Zinc finger protein zfp-2.